Consider the following 503-residue polypeptide: Long-chain-aldehyde dehydrogenase (503 aa).

218 to 224 (GYGAEVG) serves as a coordination point for NAD(+). Catalysis depends on residues glutamate 262 and cysteine 301.

This sequence belongs to the aldehyde dehydrogenase family. As to quaternary structure, homotetramer.

The catalysed reaction is a long-chain fatty aldehyde + NAD(+) + H2O = a long-chain fatty acid + NADH + 2 H(+). Its activity is regulated as follows. Completely inhibited by p-chloromercuribenzoate and N-ethylmaleimide. Strongly inhibited by iodoacetate. Inhibited by Pb(2+), Fe(3+), Ag(+) and Hg(2+) and partially inhibited by several other metal ions Mn(2+), Zn(2+) and Cu(2+). In terms of biological role, aldehyde dehydrogenase that shows activity toward n-alkanals (C(4) to C(14)), with a preference for longer carbon chains. The best substrate is tetradecanal. The sequence is that of Long-chain-aldehyde dehydrogenase (ald1) from Acinetobacter sp.